Consider the following 457-residue polypeptide: MDSEKMDLFSKLPDEVISHILSSLPTKEAASTSVLAKKWRYLFAFVPSLDFNDSDFLHPQEGKREKDGILRSFMDFVDRVLALQGASPIKKFSLNVKTGVDPDRVDRWICNVLQRGVSHLALFMDFEEEYSLPYEISVSKTLVELKTGYGVDLYLWDDDMFLPMLKTLVLESVEFGRGQFQTLLPACPVLEELMLLNMEWKDRNVILSSSSLKNLKITSEDGCLGTLSFDTPNLVFLDYYDYVAEDYPIVNLKNLVEVGINLVLTADRINRARDNVWNLIHGIQNAEIFHISPVTFEVLSLSCEAMPVFKNLTTLNIRTVMQQGWQAMPLLLKNCPNLETLYLGGLLHTVTNKCGDVCDCIPRKKKGRSLMACPVNKIQIQGFRGTIREVHMIKHFLDFCPSLKEMEIIVETKEPTLFEIPKWLEIVEDTLMQYNEMSSCTINYRVLAPLYWRWTRK.

Residues 6-54 (MDLFSKLPDEVISHILSSLPTKEAASTSVLAKKWRYLFAFVPSLDFNDS) enclose the F-box domain.

The chain is Putative F-box protein At3g58860 from Arabidopsis thaliana (Mouse-ear cress).